The chain runs to 649 residues: MQCSYPLARQLERSSALNNNLFQKAAIWLVIALVLFTVFKQFDKPRAQDSVTYSQFMDDAKNGKVSRVDVQGRNLVVSPKEGSKYTIISPGDIWMVGDLMKYGVQVTGKADDEPNVLVQALYYLGPTLLIIVFWFYMMRQMQGGGKGGAFSFGKSRARLIDENQNAVTFADVAGCDESKEEVVELVDFLKDPQKFQKLGGRIPRGVLLVGPPGTGKTLLARAIAGEAKVPFFSISGSDFVEMFVGVGAARVRDMFENAKKQAPCIVFIDEIDAVGRHRGAGMGGGNDEREQTLNQMLVEMDGFEANSGVIVIAATNRADVLDKALLRPGRFDRQVYVGLPDIRGREQILKVHMRKVPIGNDVDASIIARGTPGFSGADLANLVNEAALFAARRSKRVVDMQDFEDAKDKIYMGPERKSTVMREEERKATAYHESGHAVVAKLLPKADPVHKVTIMPRGWALGVTWQLPEHDKYSKYKDNMLEEIAILFGGRAAEEVFLNAMSTGASNDFERATKIARDMVTRFGMSDSLGAMVYVDTEQDGMFGKLSSKTVSEATQQKVDAEIRRIIDDQYALAKRLLEENRDKVEAMTNALMEWETIDAEQVNDIMAGRPPRPPRGAQGPNSGGNTPPGGSPVAPTNAPATARADETV.

The Cytoplasmic portion of the chain corresponds to 1 to 18; sequence MQCSYPLARQLERSSALN. A helical transmembrane segment spans residues 19–39; it reads NNLFQKAAIWLVIALVLFTVF. The Periplasmic segment spans residues 40-115; that stretch reads KQFDKPRAQD…VTGKADDEPN (76 aa). A helical membrane pass occupies residues 116 to 136; that stretch reads VLVQALYYLGPTLLIIVFWFY. Residues 137-649 lie on the Cytoplasmic side of the membrane; that stretch reads MMRQMQGGGK…PATARADETV (513 aa). 210–217 provides a ligand contact to ATP; it reads GPPGTGKT. His-432 serves as a coordination point for Zn(2+). Glu-433 is a catalytic residue. The Zn(2+) site is built by His-436 and Asp-508. Residues 606–649 form a disordered region; it reads IMAGRPPRPPRGAQGPNSGGNTPPGGSPVAPTNAPATARADETV. Residues 616 to 626 show a composition bias toward low complexity; sequence RGAQGPNSGGN.

The protein in the central section; belongs to the AAA ATPase family. It in the C-terminal section; belongs to the peptidase M41 family. Homohexamer. It depends on Zn(2+) as a cofactor.

It localises to the cell inner membrane. Acts as a processive, ATP-dependent zinc metallopeptidase for both cytoplasmic and membrane proteins. Plays a role in the quality control of integral membrane proteins. The sequence is that of ATP-dependent zinc metalloprotease FtsH from Cupriavidus metallidurans (strain ATCC 43123 / DSM 2839 / NBRC 102507 / CH34) (Ralstonia metallidurans).